Here is a 314-residue protein sequence, read N- to C-terminus: Small ribosomal subunit biogenesis GTPase RsgA (314 aa).

Residues 1–21 (MKRAPTKQPAKPAARGGERAQ) form a disordered region. Residues 85–246 (SDQFKSKLFA…LIDSPGFQEF (162 aa)) enclose the CP-type G domain. GTP-binding positions include 134–137 (NKID) and 188–196 (GQSGMGKST). 4 residues coordinate Zn(2+): Cys270, Cys275, His277, and Cys283.

It belongs to the TRAFAC class YlqF/YawG GTPase family. RsgA subfamily. As to quaternary structure, monomer. Associates with 30S ribosomal subunit, binds 16S rRNA. The cofactor is Zn(2+).

Its subcellular location is the cytoplasm. In terms of biological role, one of several proteins that assist in the late maturation steps of the functional core of the 30S ribosomal subunit. Helps release RbfA from mature subunits. May play a role in the assembly of ribosomal proteins into the subunit. Circularly permuted GTPase that catalyzes slow GTP hydrolysis, GTPase activity is stimulated by the 30S ribosomal subunit. The chain is Small ribosomal subunit biogenesis GTPase RsgA from Burkholderia pseudomallei (strain 1710b).